The following is a 364-amino-acid chain: Probable cysteine protease RDL4 (364 aa).

The signal sequence occupies residues 1–23; it reads MGSAKSAMLILLVAMVIASCATA. The propeptide at 24 to 136 is activation peptide; that stretch reads IDMSVVSYDD…DRYKTSADDV (113 aa). A glycan (N-linked (GlcNAc...) asparagine) is linked at Asn87. 3 disulfides stabilise this stretch: Cys158–Cys199, Cys192–Cys232, and Cys291–Cys342. Residue Cys161 is part of the active site. Catalysis depends on residues His297 and Asn317.

Belongs to the peptidase C1 family. As to expression, expressed in inflorescences.

Probable thiol protease. The chain is Probable cysteine protease RDL4 from Arabidopsis thaliana (Mouse-ear cress).